Here is a 155-residue protein sequence, read N- to C-terminus: Zinc finger HIT domain-containing protein 3 (155 aa).

8 residues coordinate Zn(2+): C11, C14, C22, C25, C30, C34, H38, and C42. Residues 11-42 form an HIT-type zinc finger; the sequence is CVICLEKPKYRCPACRVPYCSVVCFRKHKEQC. The residue at position 80 (S80) is a Phosphoserine.

As to quaternary structure, thyroid receptor interacting proteins (TRIPs) specifically interact with the ligand binding domain of the thyroid receptor (TR). Requires the presence of thyroid hormone for its interaction. Interacts with NUFIP1. Interacts (via HIT-type zinc finger) with the RUVBL1/RUVBL2 complex in the presence of ADP.

The protein localises to the cytoplasm. Its subcellular location is the nucleus. The protein is Zinc finger HIT domain-containing protein 3 (ZNHIT3) of Homo sapiens (Human).